The following is a 656-amino-acid chain: KVSDSAYSNSCSNSQSQRSGSSKSRLSGSHSSGSSGYGGKPSTQASSSDMIIKRNKDKSRKKKKNKGTGQGAGQAQTLISASTSLEGRDEEKPRPSGTGCVEQQICRELQDQQHGEDHSEPQATEQLQQEEEDQSGSESEADRVEGVAKSEAAQSFPIPSPLSVTIVPPSMGGCGGVGHAAGLDSGLAKFDKTWEAGPGKLESMTGVGAAAAGTGQRGERVKEDSFCCVISMHDGIVLYTTPSITDVLGYPRDMWLGRSFIDFVHLKDRATFASQITTGIPIAESRGSVPKDAKSTFCVMLRRYRGLKSGGFGVIGRPVSYEPFRLGLTFREAPEEARPDNYMVSNGTNMLLVICATPIKSSYKVPDEILSQKSPKFAIRHTATGIISHVDSAAVSALGYLPQDLIGRSIMDFYHHEDLSVMKETYETVMKKGQTAGASFCSKPYRFLIQNGCYVLLETEWTSFVNPWSRKLEFVVGHHRVFQGPKQCNVFEAAPTCKLKISEEAQSRNTRIKEDIVKRLAETVSRPSDTVKQEVSRRCQALASFMETLMDEVSRADLKSGSSGNFTTASNIHMSSVTNTSIAGTGGTGTGTGTGTGTGTGTGTGTGTGTGTGTGTGTGTGTGTGTGTGTGTGNGTNSGTGTGTTSSSRGGSTAIP.

The span at 1–34 (KVSDSAYSNSCSNSQSQRSGSSKSRLSGSHSSGS) shows a compositional bias: low complexity. The segment at 1 to 161 (KVSDSAYSNS…AAQSFPIPSP (161 aa)) is disordered. A Nuclear localization signal motif is present at residues 53-66 (KRNKDKSRKKKKNK). The span at 53 to 66 (KRNKDKSRKKKKNK) shows a compositional bias: basic residues. Basic and acidic residues predominate over residues 108–120 (ELQDQQHGEDHSE). 2 consecutive PAS domains span residues 224 to 359 (DSFC…ATPI) and 377 to 483 (FAIR…RVFQ). A disordered region spans residues 580 to 656 (TSIAGTGGTG…SSRGGSTAIP (77 aa)). 26 consecutive repeat copies span residues 584–585 (GT), 587–588 (GT), 589–590 (GT), 591–592 (GT), 593–594 (GT), 595–596 (GT), 597–598 (GT), 599–600 (GT), 601–602 (GT), 603–604 (GT), 605–606 (GT), 607–608 (GT), 609–610 (GT), 611–612 (GT), 613–614 (GT), 615–616 (GT), 617–618 (GT), 619–620 (GT), 621–622 (GT), 623–624 (GT), 625–626 (GT), 627–628 (GT), 629–630 (GT), 631–632 (GT), 633–634 (GN), and 635–636 (GT). The segment covering 584–642 (GTGGTGTGTGTGTGTGTGTGTGTGTGTGTGTGTGTGTGTGTGTGTGTGTGNGTNSGTGT) has biased composition (gly residues). Residues 584 to 644 (GTGGTGTGTG…GTNSGTGTGT (61 aa)) are 30 X 2 AA approximate tandem repeats of G-[TN]. The stretch at 637–638 (NS) is one 27; approximate repeat. A run of 3 repeats spans residues 639-640 (GT), 641-642 (GT), and 643-644 (GT). Positions 643-656 (GTTSSSRGGSTAIP) are enriched in low complexity.

Forms a heterodimer with timeless (TIM); the complex then translocates into the nucleus. Post-translationally, phosphorylated with a circadian rhythmicity, probably by the double-time protein (dbt). Phosphorylation could be implicated in the stability of per monomer and in the formation of heterodimer per-tim.

The protein resides in the nucleus. Its subcellular location is the cytoplasm. It localises to the perinuclear region. Its function is as follows. Essential for biological clock functions. Determines the period length of circadian and ultradian rhythms; an increase in PER dosage leads to shortened circadian rhythms and a decrease leads to lengthened circadian rhythms. Essential for the circadian rhythmicity of locomotor activity, eclosion behavior, and for the rhythmic component of the male courtship song that originates in the thoracic nervous system. The biological cycle depends on the rhythmic formation and nuclear localization of the TIM-PER complex. Light induces the degradation of TIM, which promotes elimination of PER. Nuclear activity of the heterodimer coordinatively regulates PER and TIM transcription through a negative feedback loop. Behaves as a negative element in circadian transcriptional loop. Does not appear to bind DNA, suggesting indirect transcriptional inhibition. This Drosophila simulans (Fruit fly) protein is Period circadian protein (per).